Consider the following 133-residue polypeptide: Ribosome-binding factor A (133 aa).

Belongs to the RbfA family. In terms of assembly, monomer. Binds 30S ribosomal subunits, but not 50S ribosomal subunits or 70S ribosomes.

It localises to the cytoplasm. Functionally, one of several proteins that assist in the late maturation steps of the functional core of the 30S ribosomal subunit. Associates with free 30S ribosomal subunits (but not with 30S subunits that are part of 70S ribosomes or polysomes). Required for efficient processing of 16S rRNA. May interact with the 5'-terminal helix region of 16S rRNA. The sequence is that of Ribosome-binding factor A from Nostoc sp. (strain PCC 7120 / SAG 25.82 / UTEX 2576).